The following is a 137-amino-acid chain: Protein Turandot X (137 aa).

Positions 1 to 24 are cleaved as a signal peptide; it reads MKVPVFQLSCLLCLIVCLLCSVKA.

Belongs to the Turandot family.

It localises to the secreted. A humoral factor that may play a role in stress tolerance. This chain is Protein Turandot X, found in Drosophila persimilis (Fruit fly).